We begin with the raw amino-acid sequence, 696 residues long: HIPL2 protein (696 aa).

Residues 1–24 (MAKTNQAITICSLLLLLLLSETTS) form the signal peptide. N-linked (GlcNAc...) asparagine glycosylation is found at Asn-38, Asn-69, Asn-74, Asn-108, Asn-124, Asn-148, Asn-175, Asn-339, Asn-431, Asn-513, Asn-519, Asn-528, Asn-581, and Asn-651. Ser-672 carries GPI-anchor amidated serine lipidation. The propeptide at 673–696 (SARKLCFSVFLLLSLLMMFLTLLD) is removed in mature form.

The protein belongs to the PQQ oxidoreductase GdhB family. The cofactor is pyrroloquinoline quinone.

The protein resides in the cell membrane. This Arabidopsis thaliana (Mouse-ear cress) protein is HIPL2 protein (HIPL2).